Consider the following 294-residue polypeptide: Diaminopimelate epimerase (294 aa).

Substrate contacts are provided by asparagine 11 and asparagine 78. Catalysis depends on cysteine 87, which acts as the Proton donor. Residues 88–89 (GN), asparagine 167, asparagine 203, and 221–222 (ER) each bind substrate. Cysteine 230 serves as the catalytic Proton acceptor. Position 231-232 (231-232 (GT)) interacts with substrate.

This sequence belongs to the diaminopimelate epimerase family. As to quaternary structure, homodimer.

It is found in the cytoplasm. The enzyme catalyses (2S,6S)-2,6-diaminopimelate = meso-2,6-diaminopimelate. It functions in the pathway amino-acid biosynthesis; L-lysine biosynthesis via DAP pathway; DL-2,6-diaminopimelate from LL-2,6-diaminopimelate: step 1/1. Catalyzes the stereoinversion of LL-2,6-diaminopimelate (L,L-DAP) to meso-diaminopimelate (meso-DAP), a precursor of L-lysine and an essential component of the bacterial peptidoglycan. The polypeptide is Diaminopimelate epimerase (Mycobacterium avium (strain 104)).